A 695-amino-acid chain; its full sequence is Amphiphysin (695 aa).

Coiled coils occupy residues 10–83 (AKNV…SLHE) and 144–191 (DYDS…QEEL). The region spanning 24–240 (VLQKLGKADE…MTKLGDQHAD (217 aa)) is the BAR domain. Disordered stretches follow at residues 244-312 (TIQG…VTPT) and 486-617 (GAPG…EASQ). Residue S252 is modified to Phosphoserine. T260 carries the post-translational modification Phosphothreonine. A compositionally biased stretch (pro residues) spans 261 to 274 (PSPPEEPSPLPSPT). 4 positions are modified to phosphoserine: S262, S268, S272, and S276. T280 is modified (phosphothreonine). Phosphoserine is present on residues S506 and S638. The 74-residue stretch at 622-695 (GFLYKVETLH…FPENFTRRLD (74 aa)) folds into the SH3 domain.

In terms of assembly, heterodimer with BIN1. Binds SH3GLB1. Interacts with REPS1 and SGIP1. Binds AP2A2. Interacts with AP2B1. Interacts with DNM1 and SYNJ1. In terms of tissue distribution, neurons, certain endocrine cell types and spermatocytes.

Its subcellular location is the cytoplasmic vesicle. It localises to the secretory vesicle. The protein resides in the synaptic vesicle membrane. It is found in the cytoplasm. The protein localises to the cytoskeleton. Functionally, may participate in mechanisms of regulated exocytosis in synapses and certain endocrine cell types. May control the properties of the membrane associated cytoskeleton. In Homo sapiens (Human), this protein is Amphiphysin (AMPH).